Consider the following 475-residue polypeptide: Sulfate adenylyltransferase subunit 1 (475 aa).

The 215-residue stretch at 25–239 (KSLLRFLTCG…EVLETVEIQR (215 aa)) folds into the tr-type G domain. The G1 stretch occupies residues 34–41 (GSVDDGKS). A GTP-binding site is contributed by 34–41 (GSVDDGKS). Residues 92 to 96 (GITID) are G2. Residues 113 to 116 (DTPG) are G3. GTP is bound by residues 113–117 (DTPGH) and 168–171 (NKMD). The interval 168–171 (NKMD) is G4. A G5 region spans residues 206–208 (SAL).

This sequence belongs to the TRAFAC class translation factor GTPase superfamily. Classic translation factor GTPase family. CysN/NodQ subfamily. In terms of assembly, heterodimer composed of CysD, the smaller subunit, and CysN.

It catalyses the reaction sulfate + ATP + H(+) = adenosine 5'-phosphosulfate + diphosphate. It functions in the pathway sulfur metabolism; hydrogen sulfide biosynthesis; sulfite from sulfate: step 1/3. In terms of biological role, with CysD forms the ATP sulfurylase (ATPS) that catalyzes the adenylation of sulfate producing adenosine 5'-phosphosulfate (APS) and diphosphate, the first enzymatic step in sulfur assimilation pathway. APS synthesis involves the formation of a high-energy phosphoric-sulfuric acid anhydride bond driven by GTP hydrolysis by CysN coupled to ATP hydrolysis by CysD. The chain is Sulfate adenylyltransferase subunit 1 from Escherichia coli (strain UTI89 / UPEC).